The primary structure comprises 305 residues: ATP synthase F(0) complex subunit B2, mitochondrial (305 aa).

The transit peptide at methionine 1–leucine 22 directs the protein to the mitochondrion.

The protein belongs to the eukaryotic ATPase B chain family. In terms of assembly, subunit of the F-type ATPase which has 2 components, CF(1) - the catalytic core - and CF(0) - the membrane proton channel.

Its subcellular location is the mitochondrion. It localises to the mitochondrion inner membrane. Mitochondrial membrane ATP synthase (F(1)F(0) ATP synthase or Complex V) produces ATP from ADP in the presence of a proton gradient across the membrane which is generated by electron transport complexes of the respiratory chain. F-type ATPases consist of two structural domains, F(1) - containing the extramembraneous catalytic core, and F(0) - containing the membrane proton channel, linked together by a central stalk and a peripheral stalk. During catalysis, ATP synthesis in the catalytic domain of F(1) is coupled via a rotary mechanism of the central stalk subunits to proton translocation. Part of the complex F(0) domain and the peripheric stalk, which acts as a stator to hold the subunits of the catalytic subcomplexes relative to the rotary elements. Plays a role in somatic development. Does not play a role in germline development. This Caenorhabditis elegans protein is ATP synthase F(0) complex subunit B2, mitochondrial.